Reading from the N-terminus, the 646-residue chain is Wee1-like protein kinase (646 aa).

Positions 1-181 (MSFLSRQQPP…GTPPHKTFRK (181 aa)) are disordered. Acidic residues predominate over residues 32 to 43 (DCEEEEEEEEEE). Ser-53 carries the post-translational modification Phosphoserine; by PLK1. A phosphoserine mark is found at Ser-78 and Ser-85. The segment covering 94 to 103 (LLPGACPGAD) has biased composition (low complexity). Residue Ser-123 is modified to Phosphoserine; by CDK1. A phosphoserine mark is found at Ser-127, Ser-137, Ser-139, Ser-150, and Ser-165. Residues 158–170 (RAGEGRRSPRPDH) are compositionally biased toward basic and acidic residues. Residues Thr-187, Thr-190, and Thr-239 each carry the phosphothreonine modification. Ser-270, Ser-307, and Ser-312 each carry phosphoserine. The 271-residue stretch at 299-569 (FHELEKIGSG…AMALVKHSVL (271 aa)) folds into the Protein kinase domain. ATP is bound by residues 305 to 313 (IGSGEFGSV) and Lys-328. Mg(2+) is bound at residue Asn-342. Residue Asp-426 is the Proton acceptor of the active site. The Mg(2+) site is built by Asn-431, Asp-463, and Gly-465. Ser-642 bears the Phosphoserine; by BRSK1 and BRSK2 mark.

This sequence belongs to the protein kinase superfamily. Ser/Thr protein kinase family. WEE1 subfamily. It depends on Mg(2+) as a cofactor. Phosphorylated during M and G1 phases. Also autophosphorylated. Phosphorylation at Ser-642 by BRSK1 and BRSK2 in post-mitotic neurons, leads to down-regulate WEE1 activity in polarized neurons. Phosphorylated at Ser-53 and Ser-123 by PLK1 and CDK1, respectively, generating an signal for degradation that can be recognized by the SCF(BTRC) complex, leading to its ubiquitination and degradation at the onset of G2/M phase. In terms of processing, dephosphorylated at Thr-239 by CTDP1. Dephosphorylated at Ser-53 and Ser-123 by the serine/threonine-protein phosphatase 2A preventing its ubiquitin-mediated degradation. Post-translationally, ubiquitinated and degraded at the onset of G2/M phase.

It localises to the nucleus. The enzyme catalyses L-tyrosyl-[protein] + ATP = O-phospho-L-tyrosyl-[protein] + ADP + H(+). Synthesis is increased during S and G2 phases, presumably by an increase in transcription; activity is decreased by phosphorylation during M phase. Protein levels fall in M phase as a result of decreased synthesis combined with degradation. Activity seems to be negatively regulated by phosphorylation upon entry into mitosis, although N-terminal phosphorylation might also regulate the protein stability via protection from proteolysis or might regulate the subcellular location. In terms of biological role, acts as a negative regulator of entry into mitosis (G2 to M transition) by protecting the nucleus from cytoplasmically activated cyclin B1-complexed CDK1 before the onset of mitosis by mediating phosphorylation of CDK1 on 'Tyr-15'. Specifically phosphorylates and inactivates cyclin B1-complexed CDK1 reaching a maximum during G2 phase and a minimum as cells enter M phase. Phosphorylation of cyclin B1-CDK1 occurs exclusively on 'Tyr-15' and phosphorylation of monomeric CDK1 does not occur. Its activity increases during S and G2 phases and decreases at M phase when it is hyperphosphorylated. A correlated decrease in protein level occurs at M/G1 phase, probably due to its degradation. This is Wee1-like protein kinase from Homo sapiens (Human).